We begin with the raw amino-acid sequence, 130 residues long: Small ribosomal subunit protein uS8 (130 aa).

This sequence belongs to the universal ribosomal protein uS8 family. Part of the 30S ribosomal subunit. Contacts proteins S5 and S12.

In terms of biological role, one of the primary rRNA binding proteins, it binds directly to 16S rRNA central domain where it helps coordinate assembly of the platform of the 30S subunit. This is Small ribosomal subunit protein uS8 from Onion yellows phytoplasma (strain OY-M).